Reading from the N-terminus, the 392-residue chain is Serpin B11 (392 aa).

Residues 341–365 form an RCL region; that stretch reads EEGTEAAAATGDSIAVKSLPMRAQF.

Belongs to the serpin family. Ov-serpin subfamily. Detected in a restricted number of tissues, including lung, placenta, prostate, and tonsil.

The protein localises to the cytoplasm. Functionally, has no serine protease inhibitory activity, probably due to variants in the scaffold impairing conformational change. The protein is Serpin B11 (SERPINB11) of Homo sapiens (Human).